A 327-amino-acid chain; its full sequence is Thiamine thiazole synthase (327 aa).

Substrate contacts are provided by residues Cys86, 107-108, Gly115, and Val182; that span reads EA. Cys216 is subject to 2,3-didehydroalanine (Cys). Substrate contacts are provided by residues Asp218, His233, Met285, and 295–297; that span reads RMG.

It belongs to the THI4 family. In terms of assembly, homooctamer. It depends on Fe cation as a cofactor. Post-translationally, during the catalytic reaction, a sulfide is transferred from Cys-216 to a reaction intermediate, generating a dehydroalanine residue.

Its subcellular location is the cytoplasm. It is found in the nucleus. It carries out the reaction [ADP-thiazole synthase]-L-cysteine + glycine + NAD(+) = [ADP-thiazole synthase]-dehydroalanine + ADP-5-ethyl-4-methylthiazole-2-carboxylate + nicotinamide + 3 H2O + 2 H(+). Functionally, involved in biosynthesis of the thiamine precursor thiazole. Catalyzes the conversion of NAD and glycine to adenosine diphosphate 5-(2-hydroxyethyl)-4-methylthiazole-2-carboxylic acid (ADT), an adenylated thiazole intermediate. The reaction includes an iron-dependent sulfide transfer from a conserved cysteine residue of the protein to a thiazole intermediate. The enzyme can only undergo a single turnover, which suggests it is a suicide enzyme. May have additional roles in adaptation to various stress conditions and in DNA damage tolerance. The polypeptide is Thiamine thiazole synthase (Aspergillus oryzae (strain ATCC 42149 / RIB 40) (Yellow koji mold)).